The primary structure comprises 772 residues: Polyribonucleotide nucleotidyltransferase (772 aa).

Residues Asp-486 and Asp-492 each coordinate Mg(2+). The 60-residue stretch at 553 to 612 folds into the KH domain; sequence PRIETLQIDKSKIRDVIGTGGKVIREIVATTGAKVDIDDEGLIKISSSDLTQIEAAKNWI. One can recognise an S1 motif domain in the interval 622–690; it reads GKIYKGKVVN…QRGKVRLSMR (69 aa). The interval 695 to 772 is disordered; that stretch reads ETGAELEDTR…HMPAFLKSDD (78 aa). The segment covering 701 to 760 has biased composition (basic and acidic residues); the sequence is EDTRPPREPREPRGDRGDRGDRGDRRGPRGDRGPRREGGDRGPRREGGDRPRRDRDDGPA.

The protein belongs to the polyribonucleotide nucleotidyltransferase family. Mg(2+) is required as a cofactor.

It is found in the cytoplasm. The catalysed reaction is RNA(n+1) + phosphate = RNA(n) + a ribonucleoside 5'-diphosphate. Involved in mRNA degradation. Catalyzes the phosphorolysis of single-stranded polyribonucleotides processively in the 3'- to 5'-direction. In Novosphingobium aromaticivorans (strain ATCC 700278 / DSM 12444 / CCUG 56034 / CIP 105152 / NBRC 16084 / F199), this protein is Polyribonucleotide nucleotidyltransferase.